Consider the following 470-residue polypeptide: Metalloreductase STEAP4 (470 aa).

NADP(+) contacts are provided by residues 27 to 30 (TGDF), 49 to 50 (SR), tyrosine 67, 81 to 85 (MHREH), asparagine 106, and alanine 139. 2 residues coordinate FAD: tryptophan 140 and aspartate 148. Position 171 (arginine 171) interacts with NADP(+). Helical transmembrane passes span 202–224 (FPFY…REVI) and 236–256 (YRLA…ILLA). A Fe(3+)-binding site is contributed by tyrosine 217. The region spanning 247–395 (FPITALILLA…LGYLTLVLCT (149 aa)) is the Ferric oxidoreductase domain. Positions 269 and 290 each coordinate FAD. 2 consecutive transmembrane segments (helical) span residues 293-313 (LGLV…VIPI) and 342-362 (AWIN…FLLL). Histidine 304 is a heme b binding site. Tyrosine 307 contacts Fe(3+). Residues serine 366 and glutamine 383 each coordinate FAD. 2 helical membrane passes run 381–401 (FVQS…TLVY) and 419–439 (AYIL…ILIM). Residue histidine 397 participates in heme b binding.

Belongs to the STEAP family. As to quaternary structure, homotrimer. Interacts with PTK2/FAK1; the interaction may regulate PTK2 phosphorylation. FAD serves as cofactor. Requires heme b as cofactor. As to expression, expressed in white and brown adipose tissues cells, as well as in muscle and liver cells. Detected in joints and spleens of arthritic mice.

It localises to the cell membrane. The protein resides in the golgi apparatus membrane. Its subcellular location is the early endosome membrane. It catalyses the reaction 2 Fe(2+) + NADP(+) + H(+) = 2 Fe(3+) + NADPH. The enzyme catalyses 2 Cu(+) + NADP(+) + H(+) = 2 Cu(2+) + NADPH. Its function is as follows. Integral membrane protein that functions as a NADPH-dependent ferric-chelate reductase, using NADPH from one side of the membrane to reduce a Fe(3+) chelate that is bound on the other side of the membrane. Mediates sequential transmembrane electron transfer from NADPH to FAD and onto heme, and finally to the Fe(3+) chelate. Can also reduce Cu(2+) to Cu(1+). Plays a role in systemic metabolic homeostasis, integrating inflammatory and metabolic responses. Associated with obesity and insulin-resistance. Involved in inflammatory arthritis, through the regulation of inflammatory cytokines. Inhibits anchorage-independent cell proliferation. The sequence is that of Metalloreductase STEAP4 (Steap4) from Mus musculus (Mouse).